A 419-amino-acid chain; its full sequence is Tetraspanning orphan receptor (419 aa).

At 1–28 the chain is on the cytoplasmic side; the sequence is MPRAPALLTNDARHQFTCCLCLHVRTGT. A helical membrane pass occupies residues 29–49; the sequence is IIFGITQIIIQLVFISFLFLM. Over 50–165 the chain is Extracellular; that stretch reads TFNPRLIPED…EVKIKHFSPY (116 aa). A helical transmembrane segment spans residues 166 to 186; sequence IAVCVTTFSLAFCCFMVHGAI. Residues 187–193 are Cytoplasmic-facing; it reads TKQPTHL. The chain crosses the membrane as a helical span at residues 194–214; sequence LPFFFIQVFDLIICLIHILGF. At 215-240 the chain is on the extracellular side; that stretch reads MSSTSDLRLMIHTKTGPIYIKSTGFT. The chain crosses the membrane as a helical span at residues 241–261; the sequence is FIILSISCMMLAFKAYCLGMV. At 262–419 the chain is on the cytoplasmic side; sequence WDCYKYLMLN…SAPSNAHSSC (158 aa). A compositionally biased stretch (low complexity) spans 303-316; it reads NNSIGNSGSPNEPN. Residues 303–328 form a disordered region; the sequence is NNSIGNSGSPNEPNTRPRPEPITYDP.

As to quaternary structure, interacts (via N-terminal extracellular domain) with human C2a. Phosphorylated on tyrosine residues.

It is found in the cell membrane. In terms of biological role, cell surface receptor that binds to human complement C2a protein. This results in inhibition of the classical and lectin pathways of complement activation, probably due to interference with binding of C2a to C4b and interference with cleavage by C1 or MASP2 such that C3 convertase cannot be formed. This infers resistance to complement-mediated cell lysis, allowing parasite survival and infection. This is Tetraspanning orphan receptor from Schistosoma mansoni (Blood fluke).